We begin with the raw amino-acid sequence, 510 residues long: ATP synthase subunit alpha (510 aa).

Position 169–176 (169–176 (GDRQTGKS)) interacts with ATP.

This sequence belongs to the ATPase alpha/beta chains family. F-type ATPases have 2 components, CF(1) - the catalytic core - and CF(0) - the membrane proton channel. CF(1) has five subunits: alpha(3), beta(3), gamma(1), delta(1), epsilon(1). CF(0) has three main subunits: a(1), b(2) and c(9-12). The alpha and beta chains form an alternating ring which encloses part of the gamma chain. CF(1) is attached to CF(0) by a central stalk formed by the gamma and epsilon chains, while a peripheral stalk is formed by the delta and b chains.

The protein resides in the cell membrane. It carries out the reaction ATP + H2O + 4 H(+)(in) = ADP + phosphate + 5 H(+)(out). Functionally, produces ATP from ADP in the presence of a proton gradient across the membrane. The alpha chain is a regulatory subunit. In Wigglesworthia glossinidia brevipalpis, this protein is ATP synthase subunit alpha.